A 405-amino-acid polypeptide reads, in one-letter code: Imidazolonepropionase (405 aa).

His73 and His75 together coordinate Fe(3+). Positions 73 and 75 each coordinate Zn(2+). 4-imidazolone-5-propanoate is bound by residues Arg82, Tyr145, and His178. Tyr145 lines the N-formimidoyl-L-glutamate pocket. Fe(3+) is bound at residue His243. His243 is a binding site for Zn(2+). Gln246 serves as a coordination point for 4-imidazolone-5-propanoate. Asp318 provides a ligand contact to Fe(3+). Asp318 provides a ligand contact to Zn(2+). The N-formimidoyl-L-glutamate site is built by Asn320 and Gly322. Thr323 lines the 4-imidazolone-5-propanoate pocket.

It belongs to the metallo-dependent hydrolases superfamily. HutI family. Requires Zn(2+) as cofactor. It depends on Fe(3+) as a cofactor.

Its subcellular location is the cytoplasm. It carries out the reaction 4-imidazolone-5-propanoate + H2O = N-formimidoyl-L-glutamate. It functions in the pathway amino-acid degradation; L-histidine degradation into L-glutamate; N-formimidoyl-L-glutamate from L-histidine: step 3/3. Functionally, catalyzes the hydrolytic cleavage of the carbon-nitrogen bond in imidazolone-5-propanoate to yield N-formimidoyl-L-glutamate. It is the third step in the universal histidine degradation pathway. This Brucella anthropi (strain ATCC 49188 / DSM 6882 / CCUG 24695 / JCM 21032 / LMG 3331 / NBRC 15819 / NCTC 12168 / Alc 37) (Ochrobactrum anthropi) protein is Imidazolonepropionase.